The following is a 299-amino-acid chain: 33 kDa chaperonin (299 aa).

Disulfide bonds link C234–C236 and C268–C271.

Belongs to the HSP33 family. Under oxidizing conditions two disulfide bonds are formed involving the reactive cysteines. Under reducing conditions zinc is bound to the reactive cysteines and the protein is inactive.

The protein localises to the cytoplasm. Redox regulated molecular chaperone. Protects both thermally unfolding and oxidatively damaged proteins from irreversible aggregation. Plays an important role in the bacterial defense system toward oxidative stress. This is 33 kDa chaperonin from Pseudomonas putida (strain GB-1).